Consider the following 357-residue polypeptide: MKGNVLIMAGGTGGHVFPALACAREFQARGYAVHWLGTPRGIENDLVPKAGLPLHLIQVSGLRGKGLKSLVKAPLELLKSLFQALRVIRQLRPVCVLGLGGYVTGPGGLAARLNGVPLVIHEQNAVAGTANRSLAPIARRVCEAFPDTFPASDKRLTTGNPVRGELFLDAHARAPLTGRRVNLLVLGGSLGAEPLNKLLPEALAQVPLEIRPAIRHQAGRQHAEITAERYRTVAVEADVAPFISDMAAAYAWADLVICRAGALTVSELTAAGLPAFLVPLPHAIDDHQTRNAEFLVRSGAGRLLPQKSTGAAELAAQLSEVLMHPETLRSMADQARSLAKPEATRTVVDACLEVARG.

Residues 12–14 (TGG), Asn-124, Arg-163, Ser-189, Ile-243, 262–267 (ALTVSE), and Gln-288 contribute to the UDP-N-acetyl-alpha-D-glucosamine site.

The protein belongs to the glycosyltransferase 28 family. MurG subfamily.

Its subcellular location is the cell inner membrane. The enzyme catalyses di-trans,octa-cis-undecaprenyl diphospho-N-acetyl-alpha-D-muramoyl-L-alanyl-D-glutamyl-meso-2,6-diaminopimeloyl-D-alanyl-D-alanine + UDP-N-acetyl-alpha-D-glucosamine = di-trans,octa-cis-undecaprenyl diphospho-[N-acetyl-alpha-D-glucosaminyl-(1-&gt;4)]-N-acetyl-alpha-D-muramoyl-L-alanyl-D-glutamyl-meso-2,6-diaminopimeloyl-D-alanyl-D-alanine + UDP + H(+). Its pathway is cell wall biogenesis; peptidoglycan biosynthesis. In terms of biological role, cell wall formation. Catalyzes the transfer of a GlcNAc subunit on undecaprenyl-pyrophosphoryl-MurNAc-pentapeptide (lipid intermediate I) to form undecaprenyl-pyrophosphoryl-MurNAc-(pentapeptide)GlcNAc (lipid intermediate II). The protein is UDP-N-acetylglucosamine--N-acetylmuramyl-(pentapeptide) pyrophosphoryl-undecaprenol N-acetylglucosamine transferase of Pseudomonas aeruginosa (strain LESB58).